Here is a 606-residue protein sequence, read N- to C-terminus: Preterminal protein (606 aa).

Residues 320–329 carry the Nuclear localization signal motif; it reads RLPVRRRRRR. S515 carries the O-(5'-phospho-DNA)-serine modification. Positions 573 to 606 are disordered; the sequence is HLPLPERQADIPLPPLPAGPEPPLPPGARPRRRF. The span at 584 to 600 shows a compositional bias: pro residues; it reads PLPPLPAGPEPPLPPGA.

Belongs to the adenoviridae terminal protein family. As to quaternary structure, heterodimer with the polymerase; this heterodimer binds to bp 9 to 18 of the genome. Interacts with host POU2F1; POU2F1 binds to the auxiliary sequences in the inverted terminal repeats and tethers the pTP-POL heterodimer to the origin DNA thereby participating in the assembly of the pre-initiation complex (POL-TP-DBP-NFIA-POU2F1). Post-translationally, preterminal protein is used to replicate viral genome, upon genomic encapsidation it is processed first into iTP and finally into TP by adenovirus protease.

The protein localises to the host nucleus matrix. Its function is as follows. Protein covalently bound to the viral DNA that acts as a primer for viral genomic replication by DNA strand displacement. Assembles on the viral origin of replication in an initiation complex with viral polymerase, DBP, host NFIA and host POU2F1/OCT1. During initiation, the polymerase covalently couples the first dCTP with Ser-580 of pTP. The terminal protein stimulates the template activity over 20 fold compared to protein-free templates. Neo-synthesized viral genomes are linked to two preterminal proteins, one for each 5' end. These new genomes are encapsidated in the nucleus, and during capsid maturation by viral protease, preterminal protein is first cleaved into intermediary (iTP), then into mature TP. May play a role in host nuclear matrix localization of genomic DNA. This chain is Preterminal protein, found in Human adenovirus A serotype 12 (HAdV-12).